An 85-amino-acid polypeptide reads, in one-letter code: MAHKKAAGSTRNGRDSESKRLGVKRFGGESVLAGSIIVRQRGTRFHPGTNVGIGKDHTIFAKADGKVQFEQKGPLNRKYVTIVTE.

Residues 1 to 22 are disordered; it reads MAHKKAAGSTRNGRDSESKRLG.

Belongs to the bacterial ribosomal protein bL27 family.

The polypeptide is Large ribosomal subunit protein bL27 (Pseudoalteromonas translucida (strain TAC 125)).